Consider the following 131-residue polypeptide: Anaerobic and virulence modulator AnvM (131 aa).

Plays an essential role by modulating the expression of hundreds of genes including quorum sensing system genes and oxidative stress resistance genes under both aerobic and anaerobic conditions. The polypeptide is Anaerobic and virulence modulator AnvM (Pseudomonas aeruginosa (strain ATCC 15692 / DSM 22644 / CIP 104116 / JCM 14847 / LMG 12228 / 1C / PRS 101 / PAO1)).